Reading from the N-terminus, the 433-residue chain is Type I acyl-CoA thioesterase mpaH (433 aa).

The interval 58-246 (HGVGLPKELY…IKARFGTTAD (189 aa)) is abhydrolase domain. Substrate is bound at residue Val-60. The active-site Nucleophile is the Ser-139. Phe-140 is a substrate binding site. Residues Asp-163 and His-365 contribute to the active site.

This sequence belongs to the AB hydrolase superfamily. MpaH hydrolase family. As to quaternary structure, homodimer.

It localises to the peroxisome matrix. The catalysed reaction is mycophenolyl-CoA + H2O = mycophenolate + CoA + H(+). It functions in the pathway secondary metabolite biosynthesis; terpenoid biosynthesis. Functionally, type I acyl-CoA thioesterase; part of the gene cluster that mediates the biosynthesis of mycophenolic acid (MPA), the first isolated antibiotic natural product in the world obtained from a culture of Penicillium brevicompactum in 1893. MpaH acts as a peroxisomal acyl-CoA hydrolase that converts MPA-CoA into the final product MPA. The first step of the pathway is the synthesis of 5-methylorsellinic acid (5MOA) by the cytosolic polyketide synthase mpaC. 5MOA is then converted to the phthalide compound 5,7-dihydroxy-4,6-dimethylphthalide (DHMP) by the endoplasmic reticulum-bound cytochrome P450 monooxygenase mpaDE. MpaDE first catalyzes hydroxylation of 5-MOA to 4,6-dihydroxy-2-(hydroxymethyl)-3-methylbenzoic acid (DHMB). MpaDE then acts as a lactone synthase that catalyzes the ring closure to convert DHMB into DHMP. The next step is the prenylation of DHMP by the Golgi apparatus-associated prenyltransferase mpaA to yield farnesyl-DHMP (FDHMP). The ER-bound oxygenase mpaB then mediates the oxidative cleavage the C19-C20 double bond in FDHMP to yield FDHMP-3C via a mycophenolic aldehyde intermediate. The O-methyltransferase mpaG catalyzes the methylation of FDHMP-3C to yield MFDHMP-3C. After the cytosolic methylation of FDHMP-3C, MFDHMP-3C enters into peroxisomes probably via free diffusion due to its low molecular weight. Upon a peroxisomal CoA ligation reaction, catalyzed by a beta-oxidation component enzyme acyl-CoA ligase ACL891, MFDHMP-3C-CoA would then be restricted to peroxisomes for the following beta-oxidation pathway steps. The peroxisomal beta-oxidation machinery than converts MFDHMP-3C-CoA into MPA_CoA, via a beta-oxidation chain-shortening process. Finally mpaH acts as a peroxisomal acyl-CoA hydrolase with high substrate specificity toward MPA-CoA to release the final product MPA. The polypeptide is Type I acyl-CoA thioesterase mpaH (Penicillium brevicompactum).